The sequence spans 291 residues: Meiosis-specific protein SPO13 (291 aa).

Disordered regions lie at residues Met1–Thr30, Ser116–Gln143, and Cys271–Asn291. The short motif at Pro3–Arg6 is the Nuclear localization signal element. A compositionally biased stretch (basic and acidic residues) spans Ser116–Asp125. Residues Pro130–Gln143 are compositionally biased toward polar residues.

The protein resides in the nucleus. Its function is as follows. Required for meiosis I segmentation. Probably acts as a regulator of kinetochore function during meiosis I: required both for mono-orientation of kinetochores on sister chromosomes and protection of centromeric cohesin from separase-mediated cleavage. In Saccharomyces cerevisiae (strain ATCC 204508 / S288c) (Baker's yeast), this protein is Meiosis-specific protein SPO13 (SPO13).